Here is a 773-residue protein sequence, read N- to C-terminus: Kelch domain-containing protein 7A (773 aa).

The helical transmembrane segment at 23-40 threads the bilayer; that stretch reads VVLSAAALLLVTAAYKLY. A glycan (N-linked (GlcNAc...) asparagine) is linked at Asn61. Disordered stretches follow at residues 64 to 99 and 114 to 207; these read EALGQLAFQEAPPGTLPRGRRRRKASKGAGTSLDYS and SEEA…APNG. At Ser89 the chain carries Phosphoserine. Basic and acidic residues predominate over residues 114 to 126; the sequence is SEEATRKGSDESQ. Residue Asn256 is glycosylated (N-linked (GlcNAc...) asparagine). The interval 296-355 is disordered; that stretch reads KADSRPVPCPAALADAPSPGPGPEPLVTGAASRDEAANTAGGGASEAASPQPVASPSAPG. Kelch repeat units follow at residues 323–370, 488–534, 537–585, 586–628, and 631–673; these read TGAA…ENPE, KRLV…LCTL, YLFV…ALEG, HLYA…ATVC, and EIFV…AVNG. The span at 340-354 shows a compositional bias: low complexity; that stretch reads SEAASPQPVASPSAP. Ser361 bears the Phosphoserine mark.

Its subcellular location is the membrane. The protein is Kelch domain-containing protein 7A (Klhdc7a) of Mus musculus (Mouse).